The primary structure comprises 311 residues: Probable manganese-dependent inorganic pyrophosphatase (311 aa).

Histidine 9, aspartate 13, aspartate 15, aspartate 77, histidine 99, and aspartate 151 together coordinate Mn(2+).

The protein belongs to the PPase class C family. Requires Mn(2+) as cofactor.

It is found in the cytoplasm. It carries out the reaction diphosphate + H2O = 2 phosphate + H(+). The sequence is that of Probable manganese-dependent inorganic pyrophosphatase from Streptococcus sanguinis (strain SK36).